The primary structure comprises 469 residues: Glutamine synthetase (469 aa).

Residues 13 to 97 (KEVRYVDLRF…LRCDIVEPAT (85 aa)) enclose the GS beta-grasp domain. One can recognise a GS catalytic domain in the interval 105 to 469 (PRSIAKRAEA…PVEFDMYYSL (365 aa)). Residues E130 and E132 each coordinate Mg(2+). E208 is a binding site for ATP. Mg(2+) is bound by residues E213 and E221. L-glutamate is bound by residues 265–266 (NG) and G266. H270 serves as a coordination point for Mg(2+). Residues 272-274 (HQS) and S274 each bind ATP. L-glutamate contacts are provided by R322, E328, and R340. Positions 340, 345, and 353 each coordinate ATP. E358 is a Mg(2+) binding site. R360 is an L-glutamate binding site. Y398 carries the post-translational modification O-AMP-tyrosine.

Belongs to the glutamine synthetase family. As to quaternary structure, oligomer of 12 subunits arranged in the form of two hexameric ring. Requires Mg(2+) as cofactor.

It localises to the cytoplasm. It carries out the reaction L-glutamate + NH4(+) + ATP = L-glutamine + ADP + phosphate + H(+). With respect to regulation, the activity of this enzyme could be controlled by adenylation under conditions of abundant glutamine. Catalyzes the ATP-dependent biosynthesis of glutamine from glutamate and ammonia. This chain is Glutamine synthetase, found in Methylococcus capsulatus (strain ATCC 33009 / NCIMB 11132 / Bath).